The primary structure comprises 156 residues: Large ribosomal subunit protein uL15 (156 aa).

Positions 1-13 (MKLNEIKDNEGAT) are enriched in basic and acidic residues. The disordered stretch occupies residues 1–41 (MKLNEIKDNEGATKNRKRLGRGIGSGSGKTAGRGVKGQKAR). A compositionally biased stretch (gly residues) spans 21-35 (RGIGSGSGKTAGRGV).

Belongs to the universal ribosomal protein uL15 family. As to quaternary structure, part of the 50S ribosomal subunit.

In terms of biological role, binds to the 23S rRNA. This is Large ribosomal subunit protein uL15 from Sinorhizobium medicae (strain WSM419) (Ensifer medicae).